The sequence spans 580 residues: Protein O-linked-mannose beta-1,4-N-acetylglucosaminyltransferase 2 (580 aa).

At methionine 1 to serine 4 the chain is on the cytoplasmic side. The chain crosses the membrane as a helical; Signal-anchor for type II membrane protein span at residues alanine 5–leucine 25. The Lumenal portion of the chain corresponds to arginine 26–threonine 580. Residues asparagine 99 and asparagine 276 are each glycosylated (N-linked (GlcNAc...) asparagine). Positions alanine 488 to threonine 580 constitute a Fibronectin type-III domain.

The protein belongs to the glycosyltransferase 61 family. In terms of tissue distribution, highly expressed in the brain, muscle, heart, and kidney in both fetus and adult. In the brain, highest expression in the cortex and cerebellum. Highly expressed in the pancreas.

It is found in the endoplasmic reticulum membrane. The enzyme catalyses 3-O-(alpha-D-mannosyl)-L-threonyl-[protein] + UDP-N-acetyl-alpha-D-glucosamine = 3-O-(N-acetyl-beta-D-glucosaminyl-(1-&gt;4)-alpha-D-mannosyl)-L-threonyl-[protein] + UDP + H(+). Its pathway is protein modification; protein glycosylation. Functionally, O-linked mannose beta-1,4-N-acetylglucosaminyltransferase that transfers UDP-N-acetyl-D-glucosamine to the 4-position of the mannose to generate N-acetyl-D-glucosamine-beta-1,4-O-D-mannosylprotein. Involved in the biosynthesis of the phosphorylated O-mannosyl trisaccharide (N-acetylgalactosamine-beta-3-N-acetylglucosamine-beta-4-(phosphate-6-)mannose), a carbohydrate structure present in alpha-dystroglycan (DAG1), which is required for binding laminin G-like domain-containing extracellular proteins with high affinity. In Homo sapiens (Human), this protein is Protein O-linked-mannose beta-1,4-N-acetylglucosaminyltransferase 2 (POMGNT2).